Reading from the N-terminus, the 923-residue chain is Leucine--tRNA ligase (923 aa).

The short motif at 41–52 (PYPSGEGLHVGH) is the 'HIGH' region element. The 'KMSKS' region signature appears at 698 to 702 (KMSKS). An ATP-binding site is contributed by K701.

The protein belongs to the class-I aminoacyl-tRNA synthetase family.

The protein resides in the cytoplasm. It catalyses the reaction tRNA(Leu) + L-leucine + ATP = L-leucyl-tRNA(Leu) + AMP + diphosphate. The polypeptide is Leucine--tRNA ligase (Amoebophilus asiaticus (strain 5a2)).